Consider the following 475-residue polypeptide: Bifunctional protein HldE (475 aa).

The segment at 1 to 318 (MMQYSPKFNN…ENAIHHREET (318 aa)) is ribokinase. 195–198 (NMSE) contacts ATP. The active site involves D264. The segment at 344–475 (MTNGCFDILH…NVIKKIQASK (132 aa)) is cytidylyltransferase.

It in the N-terminal section; belongs to the carbohydrate kinase PfkB family. In the C-terminal section; belongs to the cytidylyltransferase family. Homodimer.

It carries out the reaction D-glycero-beta-D-manno-heptose 7-phosphate + ATP = D-glycero-beta-D-manno-heptose 1,7-bisphosphate + ADP + H(+). It catalyses the reaction D-glycero-beta-D-manno-heptose 1-phosphate + ATP + H(+) = ADP-D-glycero-beta-D-manno-heptose + diphosphate. Its pathway is nucleotide-sugar biosynthesis; ADP-L-glycero-beta-D-manno-heptose biosynthesis; ADP-L-glycero-beta-D-manno-heptose from D-glycero-beta-D-manno-heptose 7-phosphate: step 1/4. It participates in nucleotide-sugar biosynthesis; ADP-L-glycero-beta-D-manno-heptose biosynthesis; ADP-L-glycero-beta-D-manno-heptose from D-glycero-beta-D-manno-heptose 7-phosphate: step 3/4. Catalyzes the phosphorylation of D-glycero-D-manno-heptose 7-phosphate at the C-1 position to selectively form D-glycero-beta-D-manno-heptose-1,7-bisphosphate. Functionally, catalyzes the ADP transfer from ATP to D-glycero-beta-D-manno-heptose 1-phosphate, yielding ADP-D-glycero-beta-D-manno-heptose. The polypeptide is Bifunctional protein HldE (Actinobacillus pleuropneumoniae serotype 5b (strain L20)).